The following is a 130-amino-acid chain: Glycine cleavage system H protein (130 aa).

The region spanning Thr25 to Lys106 is the Lipoyl-binding domain. Lys66 is subject to N6-lipoyllysine.

Belongs to the GcvH family. The glycine cleavage system is composed of four proteins: P, T, L and H. (R)-lipoate is required as a cofactor.

Its function is as follows. The glycine cleavage system catalyzes the degradation of glycine. The H protein shuttles the methylamine group of glycine from the P protein to the T protein. This chain is Glycine cleavage system H protein, found in Leptospira borgpetersenii serovar Hardjo-bovis (strain JB197).